We begin with the raw amino-acid sequence, 229 residues long: Transmembrane emp24 domain-containing protein 5 (229 aa).

Residues 1-27 form the signal peptide; sequence MGDKIWLPFPVLLLAALPPVLLPGAAG. Residues 28–196 are Lumenal-facing; it reads FTPSLDSDFT…IQESNFDRVN (169 aa). In terms of domain architecture, GOLD spans 45 to 126; it reads RECFYQPMPL…EKVIFFELIL (82 aa). The chain crosses the membrane as a helical span at residues 197–217; the sequence is FWSMVNLVVMVVVSAIQVYML. Over 218 to 229 the chain is Cytoplasmic; it reads KSLFEDKRKSRT.

Belongs to the EMP24/GP25L family. As to quaternary structure, interacts with TMED9 and TMED10.

Its subcellular location is the endoplasmic reticulum membrane. The protein localises to the golgi apparatus. It localises to the cis-Golgi network membrane. It is found in the endoplasmic reticulum-Golgi intermediate compartment membrane. In terms of biological role, potential role in vesicular protein trafficking, mainly in the early secretory pathway. Required for the maintenance of the Golgi apparatus; involved in protein exchange between Golgi stacks during assembly. Probably not required for COPI-vesicle-mediated retrograde transport. The protein is Transmembrane emp24 domain-containing protein 5 (TMED5) of Pongo abelii (Sumatran orangutan).